A 261-amino-acid chain; its full sequence is Small ribosomal subunit protein eS4B (261 aa).

S32 carries the phosphoserine modification. Residues 42 to 105 (LPLIVFLRNR…NENFRLVYDV (64 aa)) form the S4 RNA-binding domain. K62 is covalently cross-linked (Glycyl lysine isopeptide (Lys-Gly) (interchain with G-Cter in ubiquitin)). Phosphothreonine is present on T115. Residues K134, K161, K168, K174, K179, K211, and K233 each participate in a glycyl lysine isopeptide (Lys-Gly) (interchain with G-Cter in ubiquitin) cross-link. S247 carries the post-translational modification Phosphoserine.

The protein belongs to the eukaryotic ribosomal protein eS4 family. Component of the small ribosomal subunit (SSU). Mature yeast ribosomes consist of a small (40S) and a large (60S) subunit. The 40S small subunit contains 1 molecule of ribosomal RNA (18S rRNA) and 33 different proteins (encoded by 57 genes). The large 60S subunit contains 3 rRNA molecules (25S, 5.8S and 5S rRNA) and 46 different proteins (encoded by 81 genes).

It localises to the cytoplasm. Its function is as follows. Component of the ribosome, a large ribonucleoprotein complex responsible for the synthesis of proteins in the cell. The small ribosomal subunit (SSU) binds messenger RNAs (mRNAs) and translates the encoded message by selecting cognate aminoacyl-transfer RNA (tRNA) molecules. The large subunit (LSU) contains the ribosomal catalytic site termed the peptidyl transferase center (PTC), which catalyzes the formation of peptide bonds, thereby polymerizing the amino acids delivered by tRNAs into a polypeptide chain. The nascent polypeptides leave the ribosome through a tunnel in the LSU and interact with protein factors that function in enzymatic processing, targeting, and the membrane insertion of nascent chains at the exit of the ribosomal tunnel. The protein is Small ribosomal subunit protein eS4B of Saccharomyces cerevisiae (strain ATCC 204508 / S288c) (Baker's yeast).